Consider the following 145-residue polypeptide: Transcriptional regulator MraZ (145 aa).

SpoVT-AbrB domains are found at residues 5–49 (TYNH…LESE) and 78–121 (TYKI…AKEV).

This sequence belongs to the MraZ family. Forms oligomers.

The protein resides in the cytoplasm. It localises to the nucleoid. The protein is Transcriptional regulator MraZ of Ureaplasma parvum serovar 3 (strain ATCC 27815 / 27 / NCTC 11736).